The primary structure comprises 95 residues: Embryonic abundant protein 1 (95 aa).

Polar residues predominate over residues 1–10 (MASGQQQQGR). Residues 1–95 (MASGQQQQGR…IDESKYKTKS (95 aa)) are disordered. Composition is skewed to basic and acidic residues over residues 40 to 64 (AEGR…EMGR) and 75 to 95 (GGER…KTKS).

It belongs to the small hydrophilic plant seed protein family. Expressed in dry seeds and immature embryos.

In terms of biological role, em protein may act as a cytoplasm protectant during desiccation. This chain is Embryonic abundant protein 1 (EMP1), found in Oryza sativa subsp. japonica (Rice).